The following is a 119-amino-acid chain: Large ribosomal subunit protein bL20 (119 aa).

Belongs to the bacterial ribosomal protein bL20 family.

Its function is as follows. Binds directly to 23S ribosomal RNA and is necessary for the in vitro assembly process of the 50S ribosomal subunit. It is not involved in the protein synthesizing functions of that subunit. This Acidovorax sp. (strain JS42) protein is Large ribosomal subunit protein bL20.